The following is a 272-amino-acid chain: MPQPRKRFAQHWLRSETALDQIIEAAQLNMSDLVLEIGPGTGILTRRLLPLVQSIVAVELDRDLCYRLAKSFGNFNHFLLLEGDILSLDLTTQLEQFPQFQPINKVVANIPYNITSPILEKLLGSIAHPQHPSYELIVLLMQKEVAQRIVASPQSKAYGALSVRTQYLAQCDYICEVPSKAFDPPPKVDSAVIRLTPRSLETPAINPQKLDQLVKLGFANRRKMLHNNLKSIIDKDHLTLLLDQLQINPQVRAEELSLEQWIMFSNLLETVS.

6 residues coordinate S-adenosyl-L-methionine: histidine 11, leucine 13, glycine 38, glutamate 59, aspartate 84, and asparagine 109.

This sequence belongs to the class I-like SAM-binding methyltransferase superfamily. rRNA adenine N(6)-methyltransferase family. RsmA subfamily.

Its subcellular location is the cytoplasm. It catalyses the reaction adenosine(1518)/adenosine(1519) in 16S rRNA + 4 S-adenosyl-L-methionine = N(6)-dimethyladenosine(1518)/N(6)-dimethyladenosine(1519) in 16S rRNA + 4 S-adenosyl-L-homocysteine + 4 H(+). Specifically dimethylates two adjacent adenosines (A1518 and A1519) in the loop of a conserved hairpin near the 3'-end of 16S rRNA in the 30S particle. May play a critical role in biogenesis of 30S subunits. This Rippkaea orientalis (strain PCC 8801 / RF-1) (Cyanothece sp. (strain PCC 8801)) protein is Ribosomal RNA small subunit methyltransferase A.